The following is a 335-amino-acid chain: Probable pectinesterase 29 (335 aa).

An N-terminal signal peptide occupies residues 1 to 24 (MGTHRIFIGLIALCCFCLPHLIEA). N43 carries an N-linked (GlcNAc...) asparagine glycan. D166 functions as the Proton donor in the catalytic mechanism. D187 functions as the Nucleophile in the catalytic mechanism. The substrate site is built by R248 and W250. N262 is a glycosylation site (N-linked (GlcNAc...) asparagine).

Belongs to the pectinesterase family. Expressed in flower buds.

The protein localises to the secreted. Its subcellular location is the cell wall. The enzyme catalyses [(1-&gt;4)-alpha-D-galacturonosyl methyl ester](n) + n H2O = [(1-&gt;4)-alpha-D-galacturonosyl](n) + n methanol + n H(+). It participates in glycan metabolism; pectin degradation; 2-dehydro-3-deoxy-D-gluconate from pectin: step 1/5. Its function is as follows. Acts in the modification of cell walls via demethylesterification of cell wall pectin. In Arabidopsis thaliana (Mouse-ear cress), this protein is Probable pectinesterase 29 (PME29).